Reading from the N-terminus, the 301-residue chain is Diaminopimelate epimerase (301 aa).

Asn-15, Gln-47, and Asn-67 together coordinate substrate. The active-site Proton donor is Cys-76. Substrate is bound by residues 77-78 (GN), Asn-163, Asn-197, and 215-216 (ER). Cys-224 serves as the catalytic Proton acceptor. 225–226 (GS) contacts substrate.

The protein belongs to the diaminopimelate epimerase family. Homodimer.

Its subcellular location is the cytoplasm. The catalysed reaction is (2S,6S)-2,6-diaminopimelate = meso-2,6-diaminopimelate. Its pathway is amino-acid biosynthesis; L-lysine biosynthesis via DAP pathway; DL-2,6-diaminopimelate from LL-2,6-diaminopimelate: step 1/1. Catalyzes the stereoinversion of LL-2,6-diaminopimelate (L,L-DAP) to meso-diaminopimelate (meso-DAP), a precursor of L-lysine and an essential component of the bacterial peptidoglycan. This chain is Diaminopimelate epimerase, found in Rhizobium rhizogenes (strain K84 / ATCC BAA-868) (Agrobacterium radiobacter).